Here is an 852-residue protein sequence, read N- to C-terminus: Serine/threonine-protein kinase pakB (852 aa).

The disordered stretch occupies residues 1–334; the sequence is MEQSKRVSMM…NVGNKQDEEK (334 aa). Residue serine 8 is modified to Phosphoserine; by autocatalysis. The segment covering 24 to 35 has biased composition (pro residues); the sequence is SPPPNRKPPPPN. A compositionally biased stretch (low complexity) spans 44–56; the sequence is SSLNSSGSSFVSP. A compositionally biased stretch (pro residues) spans 57 to 74; the sequence is SPSPSPSPQQPVKRPLPS. Composition is skewed to low complexity over residues 90 to 117 and 124 to 163; these read RPQQ…NSNG and FSSS…GSSN. Over residues 181–191 the composition is skewed to pro residues; that stretch reads TPPPPPQPTPS. The span at 201 to 210 shows a compositional bias: polar residues; sequence ASHNNTQHNI. Low complexity-rich tracts occupy residues 246–270 and 293–317; these read SPGS…STPI and SNSN…ATTS. Residues 356–369 form the CRIB domain; that stretch reads VGSPFNVKHNIHVN. The segment covering 419-433 has biased composition (low complexity); it reads AQQEQQALMQKQMQQ. Residues 419 to 526 form a disordered region; it reads AQQEQQALMQ…GILSQQQEQQ (108 aa). A compositionally biased stretch (basic residues) spans 470 to 485; it reads PQHHHQQQPPQQHHHQ. Residues 486–514 show a composition bias toward low complexity; sequence QQQQQHNNNNNNNNNNNNNNNNQQSAQQQ. Positions 570–823 constitute a Protein kinase domain; the sequence is GEGSTKIGEG…AKVLLNHPFL (254 aa). Residues 576–584 and lysine 599 contribute to the ATP site; that span reads IGEGAAGEV. Aspartate 691 functions as the Proton acceptor in the catalytic mechanism.

Belongs to the protein kinase superfamily. STE Ser/Thr protein kinase family. STE20 subfamily. As to quaternary structure, interacts with rac1A, rac1B, rac1C, racA, racB, racC and racF1. Mg(2+) is required as a cofactor. Post-translationally, autophosphorylated at Ser-8. This may stimulate interaction with GTP-bound Rac family members which then further stimulates autophosphorylation and kinase activity.

It localises to the membrane. The protein localises to the cytoplasm. Its subcellular location is the cytoskeleton. The enzyme catalyses L-seryl-[protein] + ATP = O-phospho-L-seryl-[protein] + ADP + H(+). It carries out the reaction L-threonyl-[protein] + ATP = O-phospho-L-threonyl-[protein] + ADP + H(+). Functionally, regulator of the myosin I component of the cytoskeleton: required for regulation of cytokinesis, phagocytosis and pinocytosis. The protein is Serine/threonine-protein kinase pakB of Dictyostelium discoideum (Social amoeba).